The sequence spans 501 residues: Ectoine/hydroxyectoine transporter (501 aa).

The next 12 helical transmembrane spans lie at 9-29 (PVFY…ATLP), 45-65 (IHFG…LITL), 86-106 (FFTW…VFWG), 137-157 (AFFH…LVIA), 190-210 (LAVI…ILQM), 220-240 (VPTS…TYLI), 258-278 (LGSL…VFIL), 311-331 (WTIF…AFIA), 343-363 (VLGV…AFGG), 395-415 (LPMT…FLVT), 441-461 (IVWG…GGLE), and 465-485 (TASL…MASF).

It belongs to the BCCT transporter (TC 2.A.15) family.

It is found in the cell inner membrane. Its function is as follows. Mediates the import of ectoine and hydroxyectoine, which function as osmotic and cold stress protectants. Also has minor uptake activities for the compatible solutes proline and glycine betaine. This chain is Ectoine/hydroxyectoine transporter, found in Virgibacillus pantothenticus.